Here is a 219-residue protein sequence, read N- to C-terminus: 2-hydroxy-3-keto-5-methylthiopentenyl-1-phosphate phosphatase (219 aa).

Belongs to the HAD-like hydrolase superfamily. MtnX family.

The enzyme catalyses 2-hydroxy-5-methylsulfanyl-3-oxopent-1-enyl phosphate + H2O = 1,2-dihydroxy-5-(methylsulfanyl)pent-1-en-3-one + phosphate. It participates in amino-acid biosynthesis; L-methionine biosynthesis via salvage pathway; L-methionine from S-methyl-5-thio-alpha-D-ribose 1-phosphate: step 4/6. Its function is as follows. Dephosphorylates 2-hydroxy-3-keto-5-methylthiopentenyl-1-phosphate (HK-MTPenyl-1-P) yielding 1,2-dihydroxy-3-keto-5-methylthiopentene (DHK-MTPene). The protein is 2-hydroxy-3-keto-5-methylthiopentenyl-1-phosphate phosphatase of Bacillus cereus (strain ATCC 14579 / DSM 31 / CCUG 7414 / JCM 2152 / NBRC 15305 / NCIMB 9373 / NCTC 2599 / NRRL B-3711).